Reading from the N-terminus, the 425-residue chain is Tyrosine--tRNA ligase (425 aa).

Tyr37 provides a ligand contact to L-tyrosine. The 'HIGH' region motif lies at 42 to 51; that stretch reads PTADSLHLGH. 2 residues coordinate L-tyrosine: Tyr175 and Gln179. The 'KMSKS' region motif lies at 235–239; that stretch reads KFGKT. Lys238 contacts ATP. An S4 RNA-binding domain is found at 357–415; the sequence is QDLQQALVNAELAPSRGQARKLIEAKSVSINGSLQTDAEYTFGEDDRLFGQYTLLRRGK.

It belongs to the class-I aminoacyl-tRNA synthetase family. TyrS type 1 subfamily. Homodimer.

It localises to the cytoplasm. It catalyses the reaction tRNA(Tyr) + L-tyrosine + ATP = L-tyrosyl-tRNA(Tyr) + AMP + diphosphate + H(+). Functionally, catalyzes the attachment of tyrosine to tRNA(Tyr) in a two-step reaction: tyrosine is first activated by ATP to form Tyr-AMP and then transferred to the acceptor end of tRNA(Tyr). The protein is Tyrosine--tRNA ligase of Erwinia tasmaniensis (strain DSM 17950 / CFBP 7177 / CIP 109463 / NCPPB 4357 / Et1/99).